The primary structure comprises 551 residues: Alkaline nuclease (551 aa).

The protein belongs to the herpesviridae alkaline nuclease family. As to quaternary structure, interacts with major DNA-binding protein; this interaction increases the nuclease processivity of the alkaline exonuclease.

The protein localises to the host nucleus. Its subcellular location is the host cytoplasm. Plays a role in processing non linear or branched viral DNA intermediates in order to promote the production of mature packaged unit-length linear progeny viral DNA molecules. Exhibits endonuclease and exonuclease activities and accepts both double-stranded and single-stranded DNA as substrate. Exonuclease digestion of DNA is in the 5'-&gt; 3' direction and the products are 5'-monophosphate nucleosides. Additionally, forms a recombinase with the major DNA-binding protein, which displays strand exchange activity. The polypeptide is Alkaline nuclease (Homo sapiens (Human)).